The sequence spans 218 residues: Peptide methionine sulfoxide reductase MsrA (218 aa).

The tract at residues 1–28 (MSFLDSYRKKTQMPSTDEALPGRAQPIP) is disordered. Residue Cys57 is part of the active site.

It belongs to the MsrA Met sulfoxide reductase family.

The catalysed reaction is L-methionyl-[protein] + [thioredoxin]-disulfide + H2O = L-methionyl-(S)-S-oxide-[protein] + [thioredoxin]-dithiol. It catalyses the reaction [thioredoxin]-disulfide + L-methionine + H2O = L-methionine (S)-S-oxide + [thioredoxin]-dithiol. Functionally, has an important function as a repair enzyme for proteins that have been inactivated by oxidation. Catalyzes the reversible oxidation-reduction of methionine sulfoxide in proteins to methionine. This is Peptide methionine sulfoxide reductase MsrA from Brucella anthropi (strain ATCC 49188 / DSM 6882 / CCUG 24695 / JCM 21032 / LMG 3331 / NBRC 15819 / NCTC 12168 / Alc 37) (Ochrobactrum anthropi).